A 209-amino-acid polypeptide reads, in one-letter code: uncharacterized protein (209 aa).

Functionally, may influence the expression of the nuc gene. This is an uncharacterized protein from Shigella flexneri.